The chain runs to 338 residues: MADWYQLAQSIIFGLIFAYLLAKLISILLAFKDENLSLTRNHTTQSEYENLRKVETLTGISGETDSLIAEQGSLRGDEDESDDDDWEGVESTELDEAFSAATAFVAAAASDRLSQKVSNELQLQLYGLYKIATEGPCTAPQPSALKMTARAKWQAWQKLGAMPPEEAMEKYIDLVTQLYPAWVEGGSKRRNRSGEAAGPMGPVFSSLVYEEESDNELKIDAIHAFAREGEVENLLKCIENGIPVNARDSEGRTPLHWAIDRGHLNVAEALVDKNADVNAKDNEGQTSLHYAVVCEREALAEFLVKQKADTTIKDEDGNSPLDLCESEWSWMREKKDSN.

The chain crosses the membrane as a helical; Signal-anchor span at residues 11–31 (IIFGLIFAYLLAKLISILLAF). 2 N-linked (GlcNAc...) asparagine glycosylation sites follow: N35 and N41. The interval 69 to 89 (AEQGSLRGDEDESDDDDWEGV) is disordered. Residues 77–89 (DEDESDDDDWEGV) are compositionally biased toward acidic residues. In terms of domain architecture, ACB spans 94–184 (LDEAFSAATA…VTQLYPAWVE (91 aa)). An acyl-CoA contacts are provided by residues 126–130 (YGLYK), K152, and Y171. N191 carries an N-linked (GlcNAc...) asparagine glycan. ANK repeat units lie at residues 217–246 (LKID…PVNA), 250–279 (EGRT…DVNA), 283–312 (EGQT…DTTI), and 316–338 (DGNS…KDSN).

Belongs to the ACBP family. In terms of assembly, interacts with RAP2-12. Binds to SMO1-1 and SMO1-2. In terms of processing, glycosylated. In seeds, localized in the outer integument. As to expression, expressed at low levels in roots, stems, leaves, flowers, and siliques, especially within seeds.

The protein resides in the cell membrane. The protein localises to the secreted. Its subcellular location is the cell wall. It localises to the endoplasmic reticulum membrane. Functionally, binds medium- and long-chain acyl-CoA esters with very high affinity. Can interact in vitro with arachidonyl-CoA, barely with oleoyl-CoA, but not with palmitoyl-CoA. Confers tolerance and binds to lead ions Pb(2+), probably by promoting lead translocation from roots to shoots. May function as an intracellular carrier of acyl-CoA esters. Modulates negatively sterol synthesis during embryogenesis and gametophytes development via interactions with SMO1-1 and SMO1-2; sterols serve as lipid modulators for gene expression of homeodomain-leucine zipper IV transcription factors. This Arabidopsis thaliana (Mouse-ear cress) protein is Acyl-CoA-binding domain-containing protein 1.